Here is a 96-residue protein sequence, read N- to C-terminus: Small ribosomal subunit protein bS18c (96 aa).

This sequence belongs to the bacterial ribosomal protein bS18 family. In terms of assembly, part of the 30S ribosomal subunit.

Its subcellular location is the plastid. It is found in the chloroplast. The chain is Small ribosomal subunit protein bS18c (rps18) from Pinus thunbergii (Japanese black pine).